We begin with the raw amino-acid sequence, 598 residues long: IQ calmodulin-binding motif-containing protein 1 (598 aa).

Residues 1-157 (MKPTGTDPRI…SLFWLLGGHV (157 aa)) form an interaction with BBS1, BBS8 and BBS9 region. The tract at residues 287–598 (QEVEEQKLHQ…NLFIGGTKPP (312 aa)) is interaction with CEP290, BBS1, BBS2, BBS4, BBS5, BBS7, BBS8 and BBS9. IQ domains lie at 294–317 (LHQA…LKKL), 318–338 (PSAV…MLLE), 387–416 (EEKS…SLIE), and 417–437 (YKAA…CRKK). A coiled-coil region spans residues 336–373 (LLEINRQKEEEDLKLQLQLQRQRAMRLSRELQLSMLEI). The tract at residues 530 to 598 (AEGKEPELFL…NLFIGGTKPP (69 aa)) is interaction with BBS1, BBS2, BBS4, BBS7, BBS8 and BBS9. A Phosphoserine modification is found at Ser572.

As to quaternary structure, interacts with CEP290/NPHP6; IQCB1/NPHP5 and CEP290 are proposed to form a functional NPHP5-6 module/NPHP6; localized to the centrosome. Interacts with calmodulin, ATXN10. Interacts with NPHP1, INVS, NPHP4 and RPGRIP1L; these interactions likely require additional interactors. Associates with the BBSome complex; interacts with BBS1, BBS2, BBS4, BBS5, BBS7, BBS8 and BBS9. Ubiquitously expressed in fetal and adult tissues. Localized to the outer segments and connecting cilia of photoreceptor cells. Up-regulated in a number of primary colorectal and gastric tumors.

The protein resides in the cytoplasm. The protein localises to the cytoskeleton. Its subcellular location is the microtubule organizing center. It localises to the centrosome. It is found in the centriole. Its function is as follows. Involved in ciliogenesis. The function in an early step in cilia formation depends on its association with CEP290/NPHP6. Involved in regulation of the BBSome complex integrity, specifically for presence of BBS2 and BBS5 in the complex, and in ciliary targeting of selected BBSome cargos. May play a role in controlling entry of the BBSome complex to cilia possibly implicating CEP290/NPHP6. This Homo sapiens (Human) protein is IQ calmodulin-binding motif-containing protein 1 (IQCB1).